The primary structure comprises 394 residues: uncharacterized protein (394 aa).

The F-box domain maps to 7–51 (RKVIPNMPDLILRKIFDQYDYPVLCKMERVCRRWTNIINSKFRKE).

This is an uncharacterized protein from Caenorhabditis elegans.